We begin with the raw amino-acid sequence, 149 residues long: SsrA-binding protein (149 aa).

The protein belongs to the SmpB family.

It localises to the cytoplasm. In terms of biological role, required for rescue of stalled ribosomes mediated by trans-translation. Binds to transfer-messenger RNA (tmRNA), required for stable association of tmRNA with ribosomes. tmRNA and SmpB together mimic tRNA shape, replacing the anticodon stem-loop with SmpB. tmRNA is encoded by the ssrA gene; the 2 termini fold to resemble tRNA(Ala) and it encodes a 'tag peptide', a short internal open reading frame. During trans-translation Ala-aminoacylated tmRNA acts like a tRNA, entering the A-site of stalled ribosomes, displacing the stalled mRNA. The ribosome then switches to translate the ORF on the tmRNA; the nascent peptide is terminated with the 'tag peptide' encoded by the tmRNA and targeted for degradation. The ribosome is freed to recommence translation, which seems to be the essential function of trans-translation. The polypeptide is SsrA-binding protein (Mesoplasma florum (strain ATCC 33453 / NBRC 100688 / NCTC 11704 / L1) (Acholeplasma florum)).